Reading from the N-terminus, the 380-residue chain is Protein COS12 (380 aa).

Residues 1 to 70 (MDGAKFENTV…WKIRGKRHYL (70 aa)) are Cytoplasmic-facing. A helical membrane pass occupies residues 71–91 (VIVTALMFEVLYFLWTYSYIF). At 92–231 (RERTLGKQVS…KLLWAFKEVT (140 aa)) the chain is on the extracellular side. The helical transmembrane segment at 232–252 (IMNSRFAFFSIAYLNGLLTIP) threads the bilayer. The Cytoplasmic segment spans residues 253–257 (RLRNS). A helical membrane pass occupies residues 258–278 (LHILYVCAVLSSMIIEYLIGI). Over 279 to 380 (DKFRFKSMNL…KEAQSACNDV (102 aa)) the chain is Extracellular.

The protein belongs to the DUP/COS family.

The protein resides in the membrane. This is Protein COS12 (COS12) from Saccharomyces cerevisiae (strain ATCC 204508 / S288c) (Baker's yeast).